The chain runs to 61 residues: Large ribosomal subunit protein bL32 (61 aa).

A compositionally biased stretch (basic residues) spans 1–19 (MAHPKRRQSKTRTAKRRTH). The segment at 1-20 (MAHPKRRQSKTRTAKRRTHD) is disordered.

It belongs to the bacterial ribosomal protein bL32 family.

The sequence is that of Large ribosomal subunit protein bL32 from Porphyromonas gingivalis (strain ATCC 33277 / DSM 20709 / CIP 103683 / JCM 12257 / NCTC 11834 / 2561).